The sequence spans 434 residues: 3-phosphoshikimate 1-carboxyvinyltransferase (434 aa).

3-phosphoshikimate-binding residues include Lys-22, Ser-23, and Arg-27. Lys-22 is a binding site for phosphoenolpyruvate. The phosphoenolpyruvate site is built by Gly-94 and Arg-122. The 3-phosphoshikimate site is built by Ser-167, Gln-169, Asp-314, and Lys-341. Residue Gln-169 participates in phosphoenolpyruvate binding. The active-site Proton acceptor is the Asp-314. Residues Arg-345 and Arg-391 each coordinate phosphoenolpyruvate.

The protein belongs to the EPSP synthase family. In terms of assembly, monomer.

Its subcellular location is the cytoplasm. The catalysed reaction is 3-phosphoshikimate + phosphoenolpyruvate = 5-O-(1-carboxyvinyl)-3-phosphoshikimate + phosphate. It participates in metabolic intermediate biosynthesis; chorismate biosynthesis; chorismate from D-erythrose 4-phosphate and phosphoenolpyruvate: step 6/7. Its function is as follows. Catalyzes the transfer of the enolpyruvyl moiety of phosphoenolpyruvate (PEP) to the 5-hydroxyl of shikimate-3-phosphate (S3P) to produce enolpyruvyl shikimate-3-phosphate and inorganic phosphate. This is 3-phosphoshikimate 1-carboxyvinyltransferase from Leuconostoc mesenteroides subsp. mesenteroides (strain ATCC 8293 / DSM 20343 / BCRC 11652 / CCM 1803 / JCM 6124 / NCDO 523 / NBRC 100496 / NCIMB 8023 / NCTC 12954 / NRRL B-1118 / 37Y).